The chain runs to 623 residues: Glutathione import ATP-binding protein GsiA (623 aa).

2 ABC transporter domains span residues 15-269 and 314-564; these read VENL…RALL and LRVR…RKLL. Residues 49-56 and 357-364 each bind ATP; these read GESGSGKS.

Belongs to the ABC transporter superfamily. Glutathione importer (TC 3.A.1.5.11) family. The complex is composed of two ATP-binding proteins (GsiA), two transmembrane proteins (GsiC and GsiD) and a solute-binding protein (GsiB).

The protein localises to the cell inner membrane. The catalysed reaction is glutathione(out) + ATP + H2O = glutathione(in) + ADP + phosphate + H(+). Part of the ABC transporter complex GsiABCD involved in glutathione import. Responsible for energy coupling to the transport system. The chain is Glutathione import ATP-binding protein GsiA from Escherichia coli O1:K1 / APEC.